Consider the following 33-residue polypeptide: Photosystem II reaction center protein Psb30 (33 aa).

Residues 5–25 (VLAQLTVLTLIVISGPLVIAL) traverse the membrane as a helical segment.

This sequence belongs to the Psb30/Ycf12 family. PSII is composed of 1 copy each of membrane proteins PsbA, PsbB, PsbC, PsbD, PsbE, PsbF, PsbH, PsbI, PsbJ, PsbK, PsbL, PsbM, PsbT, PsbX, PsbY, PsbZ, Psb30/Ycf12, peripheral proteins of the oxygen-evolving complex and a large number of cofactors. It forms dimeric complexes.

It is found in the plastid. Its subcellular location is the chloroplast thylakoid membrane. A core subunit of photosystem II (PSII), probably helps stabilize the reaction center. The sequence is that of Photosystem II reaction center protein Psb30 from Cycas taitungensis (Prince sago).